We begin with the raw amino-acid sequence, 120 residues long: MADRQRDPDLADTLLLLEHPPVYTLGRGSSLDFIKFTPPASFTAGVTPSSRAEPTPPQPGPELHRTERGGEVTYHCPGQLVGYPILNLRRLSADLHWYLRQLEEYLIRVLDHYGLRGERI.

Residues 8–120 (PDLADTLLLL…DHYGLRGERI (113 aa)) form the BPL/LPL catalytic domain. Residues 42 to 68 (FTAGVTPSSRAEPTPPQPGPELHRTER) form a disordered region. 68–75 (RGGEVTYH) contributes to the substrate binding site.

It belongs to the LipB family.

The protein localises to the cytoplasm. The enzyme catalyses octanoyl-[ACP] + L-lysyl-[protein] = N(6)-octanoyl-L-lysyl-[protein] + holo-[ACP] + H(+). The protein operates within protein modification; protein lipoylation via endogenous pathway; protein N(6)-(lipoyl)lysine from octanoyl-[acyl-carrier-protein]: step 1/2. Its function is as follows. Catalyzes the transfer of endogenously produced octanoic acid from octanoyl-acyl-carrier-protein onto the lipoyl domains of lipoate-dependent enzymes. Lipoyl-ACP can also act as a substrate although octanoyl-ACP is likely to be the physiological substrate. The protein is Octanoyltransferase (lipB) of Prochlorothrix hollandica.